Here is a 476-residue protein sequence, read N- to C-terminus: Adenosylhomocysteinase (476 aa).

Positions 67, 142, and 202 each coordinate substrate. An NAD(+)-binding site is contributed by 203–205 (TTT). Positions 232 and 236 each coordinate substrate. NAD(+)-binding positions include Asn237, 266–271 (GYGDVG), Glu289, Asn324, 345–347 (IGH), and Asn390.

This sequence belongs to the adenosylhomocysteinase family. NAD(+) serves as cofactor.

Its subcellular location is the cytoplasm. The enzyme catalyses S-adenosyl-L-homocysteine + H2O = L-homocysteine + adenosine. It functions in the pathway amino-acid biosynthesis; L-homocysteine biosynthesis; L-homocysteine from S-adenosyl-L-homocysteine: step 1/1. Its function is as follows. May play a key role in the regulation of the intracellular concentration of adenosylhomocysteine. In Prochlorococcus marinus (strain MIT 9303), this protein is Adenosylhomocysteinase.